Here is a 106-residue protein sequence, read N- to C-terminus: MLLTTTPVIEGKRITHYYGIVAGEAVLGANVLKDLFAGIRDFVGGRSGTYEKELQHAREIALEELQENAHRLGANAVIGIDIDYEVLGKENGMLMVSVSGTAVFVE.

The protein belongs to the UPF0145 family.

The polypeptide is UPF0145 protein NE1032 (Nitrosomonas europaea (strain ATCC 19718 / CIP 103999 / KCTC 2705 / NBRC 14298)).